A 599-amino-acid chain; its full sequence is Adenine deaminase (599 aa).

The protein belongs to the metallo-dependent hydrolases superfamily. Adenine deaminase family. Requires Mn(2+) as cofactor.

The enzyme catalyses adenine + H2O + H(+) = hypoxanthine + NH4(+). This chain is Adenine deaminase, found in Clostridium botulinum (strain Loch Maree / Type A3).